A 110-amino-acid chain; its full sequence is Cytochrome subunit of sulfide dehydrogenase (110 aa).

Residues 1–16 form the signal peptide; sequence MLAAAPLLLASGNGFA. 4 residues coordinate heme c: C41, C44, H45, and M83.

Dimer of one cytochrome and one flavoprotein. In terms of processing, binds 1 heme c group covalently per subunit.

The protein localises to the periplasm. Monoheme cytochrome that function as the electron transport subunit of sulfide dehydrogenase. This is Cytochrome subunit of sulfide dehydrogenase (fccA) from Chlorobaculum tepidum (strain ATCC 49652 / DSM 12025 / NBRC 103806 / TLS) (Chlorobium tepidum).